The following is an 815-amino-acid chain: SNF1 protein kinase subunit beta-1 (815 aa).

Positions 1–11 are enriched in polar residues; the sequence is MGNSPSTQDPS. Disordered stretches follow at residues 1 to 88 and 117 to 146; these read MGNS…TIDK and SDDH…TVKR. Gly-2 carries the N-myristoyl glycine lipid modification. Basic and acidic residues predominate over residues 12-31; sequence HSTKKEHGHHFHDAFNKDRQ. Positions 32-42 are enriched in polar residues; that stretch reads GSITSQLFNNR. Ser-33 is subject to Phosphoserine. Composition is skewed to basic and acidic residues over residues 72–88 and 117–129; these read PSTD…TIDK and SDDH…EEQV. 6 positions are modified to phosphoserine: Ser-181, Ser-198, Ser-200, Ser-206, Ser-209, and Ser-220. Disordered regions lie at residues 311 to 335 and 362 to 389; these read HANN…NDDF and KHHN…FASL. Over residues 313–326 the composition is skewed to low complexity; it reads NNNGNIENNTRNKG. Ser-331 carries the phosphoserine modification. The segment covering 363 to 376 has biased composition (basic residues); the sequence is HHNKTKKAQNKKIR. Residues 377 to 389 are compositionally biased toward low complexity; sequence SVSNSRRSSFASL. The segment at 473-716 is kinase-interacting sequence (KIS); required for interaction with SNF1; sequence VSTDIASALK…LQQGGNIDAE (244 aa). A phosphoserine mark is found at Ser-494 and Ser-497. A disordered region spans residues 581-616; that stretch reads EPTLDEELPKRPELKRFPSSSRKSSYYSAKGVERPS. A compositionally biased stretch (basic and acidic residues) spans 587–596; sequence ELPKRPELKR. Low complexity predominate over residues 599–608; that stretch reads SSSRKSSYYS. Ser-643 carries the phosphoserine modification. An association with SNF1 kinase complex (ASC) domain; required for interaction with SNF4 region spans residues 724–804; that stretch reads SRYPVPDLPI…FITQVVYAPC (81 aa).

It belongs to the 5'-AMP-activated protein kinase beta subunit family. In terms of assembly, component of the SNF1 kinase complex, a heterotrimeric complex composed of the catalytic alpha subunit SNF1, one of the three related beta subunits SIP1, SIP2 or GAL83, and the regulatory gamma subunit SNF4. The beta subunit serves as a bridge between the catalytic and the regulatory subunit. Interacts (via KIS domain) with SNF1. Interacts (via ASC domain) with SNF4. In terms of processing, phosphorylated by SNF1 in vitro.

It is found in the cytoplasm. The protein resides in the vacuole membrane. Its function is as follows. Beta subunit of the SNF1 kinase complex, which is required for transcriptional, metabolic, and developmental adaptations in response to glucose limitation. Has a structural role, mediating heterotrimer formation, and a regulatory role, defining carbon source-regulated subcellular location and substrate specificity of the SNF1 kinase complex. Promotes the PKA-regulated relocalization of the SNF1 kinase complex to the vacuolar membrane in response to various types of carbon stress. In Saccharomyces cerevisiae (strain ATCC 204508 / S288c) (Baker's yeast), this protein is SNF1 protein kinase subunit beta-1 (SIP1).